The primary structure comprises 305 residues: tRNA pseudouridine synthase B (305 aa).

D41 acts as the Nucleophile in catalysis.

This sequence belongs to the pseudouridine synthase TruB family. Type 1 subfamily.

The catalysed reaction is uridine(55) in tRNA = pseudouridine(55) in tRNA. Functionally, responsible for synthesis of pseudouridine from uracil-55 in the psi GC loop of transfer RNAs. The chain is tRNA pseudouridine synthase B from Prochlorococcus marinus subsp. pastoris (strain CCMP1986 / NIES-2087 / MED4).